The following is a 59-amino-acid chain: Large ribosomal subunit protein bL32 (59 aa).

The disordered stretch occupies residues 1–20; sequence MAVPRNRHSNARKNIRRSHH.

This sequence belongs to the bacterial ribosomal protein bL32 family.

The chain is Large ribosomal subunit protein bL32 (rpmF) from Chlamydia muridarum (strain MoPn / Nigg).